The primary structure comprises 870 residues: DNA mismatch repair protein MutS (870 aa).

620–627 serves as a coordination point for ATP; sequence GPNMAGKS.

It belongs to the DNA mismatch repair MutS family.

In terms of biological role, this protein is involved in the repair of mismatches in DNA. It is possible that it carries out the mismatch recognition step. This protein has a weak ATPase activity. This is DNA mismatch repair protein MutS from Acetivibrio thermocellus (strain ATCC 27405 / DSM 1237 / JCM 9322 / NBRC 103400 / NCIMB 10682 / NRRL B-4536 / VPI 7372) (Clostridium thermocellum).